The primary structure comprises 714 residues: ATP-dependent DNA helicase DinG (714 aa).

The region spanning 17–294 (ALQDQIPDFI…TCMEQFRPKT (278 aa)) is the Helicase ATP-binding domain. An ATP-binding site is contributed by 54–61 (APTGVGKT). Cysteine 120, cysteine 194, cysteine 199, and cysteine 205 together coordinate [4Fe-4S] cluster. Residues 248 to 251 (DEGH) carry the DEAH box motif. Residues 517-698 (HIAEMAAYFR…VFPIEQPAVP (182 aa)) form the Helicase C-terminal domain.

It belongs to the helicase family. DinG subfamily. Type 1 sub-subfamily. Requires [4Fe-4S] cluster as cofactor.

The enzyme catalyses Couples ATP hydrolysis with the unwinding of duplex DNA at the replication fork by translocating in the 5'-3' direction. This creates two antiparallel DNA single strands (ssDNA). The leading ssDNA polymer is the template for DNA polymerase III holoenzyme which synthesizes a continuous strand.. It catalyses the reaction ATP + H2O = ADP + phosphate + H(+). In terms of biological role, DNA-dependent ATPase and 5'-3' DNA helicase. Unwinds D-loops, R-loops, forked DNA and G-quadruplex DNA. This chain is ATP-dependent DNA helicase DinG, found in Salmonella paratyphi A (strain ATCC 9150 / SARB42).